Reading from the N-terminus, the 189-residue chain is Peptidyl-tRNA hydrolase (189 aa).

Tyr16 contacts tRNA. The active-site Proton acceptor is His21. TRNA-binding residues include Phe67, Asn69, and Asn115.

Belongs to the PTH family. In terms of assembly, monomer.

It is found in the cytoplasm. It catalyses the reaction an N-acyl-L-alpha-aminoacyl-tRNA + H2O = an N-acyl-L-amino acid + a tRNA + H(+). Its function is as follows. Hydrolyzes ribosome-free peptidyl-tRNAs (with 1 or more amino acids incorporated), which drop off the ribosome during protein synthesis, or as a result of ribosome stalling. Functionally, catalyzes the release of premature peptidyl moieties from peptidyl-tRNA molecules trapped in stalled 50S ribosomal subunits, and thus maintains levels of free tRNAs and 50S ribosomes. The polypeptide is Peptidyl-tRNA hydrolase (Legionella pneumophila subsp. pneumophila (strain Philadelphia 1 / ATCC 33152 / DSM 7513)).